The sequence spans 100 residues: MKNPLIGGVRFYQRFISPGLPARCRYYPTCSQYMIDAIHTHGSVKGTTMGVARILRCHPFVKGGIDYVPLKFRLTKNPDETYHGPYTYRRNKKTEVEKDG.

Belongs to the UPF0161 family.

It is found in the cell membrane. Could be involved in insertion of integral membrane proteins into the membrane. The protein is Putative membrane protein insertion efficiency factor of Enterococcus faecalis (strain ATCC 700802 / V583).